A 352-amino-acid polypeptide reads, in one-letter code: DNA polymerase IV (352 aa).

Residues 4–185 (IIHVDMDCFF…LPLSKIPGVG (182 aa)) form the UmuC domain. Asp8 and Asp103 together coordinate Mg(2+). Residue Glu104 is part of the active site.

This sequence belongs to the DNA polymerase type-Y family. In terms of assembly, monomer. The cofactor is Mg(2+).

The protein localises to the cytoplasm. The enzyme catalyses DNA(n) + a 2'-deoxyribonucleoside 5'-triphosphate = DNA(n+1) + diphosphate. Its function is as follows. Poorly processive, error-prone DNA polymerase involved in untargeted mutagenesis. Copies undamaged DNA at stalled replication forks, which arise in vivo from mismatched or misaligned primer ends. These misaligned primers can be extended by PolIV. Exhibits no 3'-5' exonuclease (proofreading) activity. May be involved in translesional synthesis, in conjunction with the beta clamp from PolIII. The polypeptide is DNA polymerase IV (Yersinia pseudotuberculosis serotype O:1b (strain IP 31758)).